A 402-amino-acid polypeptide reads, in one-letter code: Guanine nucleotide-binding protein subunit alpha-1 (402 aa).

The span at 1–12 shows a compositional bias: polar residues; that stretch reads MGCSASKPSEPS. Positions 1 to 70 are disordered; the sequence is MGCSASKPSE…PEPQKPAEPA (70 aa). Glycine 2 carries the N-myristoyl glycine lipid modification. Cysteine 3 carries the S-palmitoyl cysteine lipid modification. Positions 23–33 are enriched in basic and acidic residues; sequence KKVEQVPEPKP. Pro residues predominate over residues 34–69; that stretch reads EPQPQPEPQPQPEPPKPAEPAPAPAPAPEPQKPAEP. The G-alpha domain maps to 82 to 402; sequence EAYGLLLCGA…FISDKYYQDA (321 aa). The interval 85-98 is G1 motif; the sequence is GLLLCGAGESGKTT. The GTP site is built by glutamate 93, serine 94, glycine 95, lysine 96, threonine 97, threonine 98, aspartate 198, leucine 223, serine 229, glycine 251, asparagine 317, lysine 318, aspartate 320, and alanine 377. Threonine 97 is a binding site for Mg(2+). The interval 221–229 is G2 motif; the sequence is DVLRARIRS. Serine 229 contacts Mg(2+). A G3 motif region spans residues 244–253; that stretch reads IRIFDVGGQK. The segment at 313 to 320 is G4 motif; the sequence is FLVCNKFD. The tract at residues 375-380 is G5 motif; that stretch reads IVALNG.

It belongs to the G-alpha family. G proteins are composed of 3 units; alpha, beta and gamma. The alpha chain contains the guanine nucleotide binding site. It depends on Mg(2+) as a cofactor.

Its subcellular location is the cytoplasm. It localises to the perinuclear region. It is found in the endomembrane system. Functionally, guanine nucleotide-binding proteins (G proteins) are involved as modulators or transducers in various transmembrane signaling systems. The chain is Guanine nucleotide-binding protein subunit alpha-1 (GA1) from Trichomonas vaginalis.